Consider the following 371-residue polypeptide: N-acetyldiaminopimelate deacetylase (371 aa).

Asp-68 is an active-site residue. Glu-127 serves as the catalytic Proton acceptor.

The protein belongs to the peptidase M20A family. N-acetyldiaminopimelate deacetylase subfamily.

It carries out the reaction N-acetyl-(2S,6S)-2,6-diaminopimelate + H2O = (2S,6S)-2,6-diaminopimelate + acetate. The protein operates within amino-acid biosynthesis; L-lysine biosynthesis via DAP pathway; LL-2,6-diaminopimelate from (S)-tetrahydrodipicolinate (acetylase route): step 3/3. Its function is as follows. Catalyzes the conversion of N-acetyl-diaminopimelate to diaminopimelate and acetate. In Listeria welshimeri serovar 6b (strain ATCC 35897 / DSM 20650 / CCUG 15529 / CIP 8149 / NCTC 11857 / SLCC 5334 / V8), this protein is N-acetyldiaminopimelate deacetylase.